Here is a 278-residue protein sequence, read N- to C-terminus: NAD-capped RNA hydrolase NudC (278 aa).

Arg-84 is a substrate binding site. Zn(2+)-binding residues include Cys-114 and Cys-117. Residue Glu-127 coordinates substrate. Zn(2+) contacts are provided by Cys-132 and Cys-135. A substrate-binding site is contributed by Tyr-140. One can recognise a Nudix hydrolase domain in the interval 141–265 (PRLSPSMIVL…IARHLIDLYL (125 aa)). 3 residues coordinate a divalent metal cation: Ala-174, Glu-190, and Glu-194. Residues 175 to 196 (GFVEAGESVEQCVVREVREEVG) carry the Nudix box motif. Residue 208-215 (QNWPFPHS) coordinates substrate. Glu-235 is an a divalent metal cation binding site. Position 257 (Ala-257) interacts with substrate.

Belongs to the Nudix hydrolase family. NudC subfamily. As to quaternary structure, homodimer. Mg(2+) is required as a cofactor. Requires Mn(2+) as cofactor. It depends on Zn(2+) as a cofactor.

It catalyses the reaction a 5'-end NAD(+)-phospho-ribonucleoside in mRNA + H2O = a 5'-end phospho-adenosine-phospho-ribonucleoside in mRNA + beta-nicotinamide D-ribonucleotide + 2 H(+). The catalysed reaction is NAD(+) + H2O = beta-nicotinamide D-ribonucleotide + AMP + 2 H(+). It carries out the reaction NADH + H2O = reduced beta-nicotinamide D-ribonucleotide + AMP + 2 H(+). Its function is as follows. mRNA decapping enzyme that specifically removes the nicotinamide adenine dinucleotide (NAD) cap from a subset of mRNAs by hydrolyzing the diphosphate linkage to produce nicotinamide mononucleotide (NMN) and 5' monophosphate mRNA. The NAD-cap is present at the 5'-end of some mRNAs and stabilizes RNA against 5'-processing. Has preference for mRNAs with a 5'-end purine. Catalyzes the hydrolysis of a broad range of dinucleotide pyrophosphates. This is NAD-capped RNA hydrolase NudC from Pseudomonas aeruginosa (strain ATCC 15692 / DSM 22644 / CIP 104116 / JCM 14847 / LMG 12228 / 1C / PRS 101 / PAO1).